The primary structure comprises 93 residues: UPF0358 protein BLi01701/BL02974 (93 aa).

It belongs to the UPF0358 family.

The polypeptide is UPF0358 protein BLi01701/BL02974 (Bacillus licheniformis (strain ATCC 14580 / DSM 13 / JCM 2505 / CCUG 7422 / NBRC 12200 / NCIMB 9375 / NCTC 10341 / NRRL NRS-1264 / Gibson 46)).